A 257-amino-acid chain; its full sequence is Aspartate/glutamate leucyltransferase (257 aa).

This sequence belongs to the R-transferase family. Bpt subfamily.

The protein localises to the cytoplasm. It carries out the reaction N-terminal L-glutamyl-[protein] + L-leucyl-tRNA(Leu) = N-terminal L-leucyl-L-glutamyl-[protein] + tRNA(Leu) + H(+). It catalyses the reaction N-terminal L-aspartyl-[protein] + L-leucyl-tRNA(Leu) = N-terminal L-leucyl-L-aspartyl-[protein] + tRNA(Leu) + H(+). Its function is as follows. Functions in the N-end rule pathway of protein degradation where it conjugates Leu from its aminoacyl-tRNA to the N-termini of proteins containing an N-terminal aspartate or glutamate. This chain is Aspartate/glutamate leucyltransferase, found in Leptospira interrogans serogroup Icterohaemorrhagiae serovar copenhageni (strain Fiocruz L1-130).